The primary structure comprises 139 residues: Holo-[acyl-carrier-protein] synthase (139 aa).

Mg(2+)-binding residues include D8 and E61.

Belongs to the P-Pant transferase superfamily. AcpS family. Mg(2+) is required as a cofactor.

Its subcellular location is the cytoplasm. The enzyme catalyses apo-[ACP] + CoA = holo-[ACP] + adenosine 3',5'-bisphosphate + H(+). In terms of biological role, transfers the 4'-phosphopantetheine moiety from coenzyme A to a Ser of acyl-carrier-protein. The sequence is that of Holo-[acyl-carrier-protein] synthase from Nitrobacter winogradskyi (strain ATCC 25391 / DSM 10237 / CIP 104748 / NCIMB 11846 / Nb-255).